The chain runs to 248 residues: UPF0524 protein C3orf70 homolog (248 aa).

Residues 169-248 (KESDTPKLGH…EVIETMETTV (80 aa)) are disordered. A compositionally biased stretch (acidic residues) spans 200–227 (SCDEDTEEGAELSSEEDYSPESSWEPDE).

It belongs to the UPF0524 family.

May play a role in neuronal and neurobehavioral development. The sequence is that of UPF0524 protein C3orf70 homolog from Mus musculus (Mouse).